We begin with the raw amino-acid sequence, 368 residues long: Meiotic driver wtf23 (368 aa).

The disordered stretch occupies residues 1–98 (MKNKYYPLRS…SSGTADNSST (98 aa)). Positions 11–29 (SMDELSAKNDNEIDLEKGP) are enriched in basic and acidic residues. 2 stretches are compositionally biased toward polar residues: residues 57–72 (GANN…STTP) and 89–98 (SSGTADNSST). 7 consecutive transmembrane segments (helical) span residues 105–124 (FLSF…YLTY), 139–158 (YFGV…WYFY), 170–192 (IFLA…VISI), 202–221 (MIII…GCVK), 234–256 (STCT…FWTF), 266–283 (VFLL…TMFL), and 328–350 (GIAF…FRGG).

It belongs to the WTF family. As to quaternary structure, homomer. Forms protein aggregates. The two isoforms can interact with each other and with themselves. High sequence similarity is required for their interaction.

It localises to the spore membrane. Its subcellular location is the vacuole membrane. It is found in the ascus epiplasm. The protein localises to the cytoplasm. The protein resides in the endoplasmic reticulum membrane. Its function is as follows. Promotes unequal transmission of alleles from the parental zygote to progeny spores by acting as poison/antidote system where the poison and antidote proteins are produced from the same locus; the poison component is trans-acting and targets all spores within an ascus whereas the antidote component is spore-specific, leading to poisoning of all progeny that do not inherit the allele. Localizes isoform 2 to the vacuole thereby facilitating its degradation. In terms of biological role, forms toxic aggregates that disrupt spore maturation. In Schizosaccharomyces pombe (strain 972 / ATCC 24843) (Fission yeast), this protein is Meiotic driver wtf23.